Consider the following 248-residue polypeptide: PACRG-like protein (248 aa).

Met-1 carries the N-acetylmethionine modification. The span at Met-1–Gln-29 shows a compositional bias: polar residues. A disordered region spans residues Met-1–Gly-71. Low complexity predominate over residues Ser-39 to Glu-49. Ser-47 carries the post-translational modification Phosphoserine.

The chain is PACRG-like protein (PACRGL) from Homo sapiens (Human).